We begin with the raw amino-acid sequence, 426 residues long: Serine--tRNA ligase (426 aa).

233 to 235 (TAE) contributes to the L-serine binding site. 264-266 (RSE) is a binding site for ATP. Position 287 (Glu-287) interacts with L-serine. Position 351-354 (351-354 (EISS)) interacts with ATP. Ser-387 is an L-serine binding site.

The protein belongs to the class-II aminoacyl-tRNA synthetase family. Type-1 seryl-tRNA synthetase subfamily. As to quaternary structure, homodimer. The tRNA molecule binds across the dimer.

It localises to the cytoplasm. It carries out the reaction tRNA(Ser) + L-serine + ATP = L-seryl-tRNA(Ser) + AMP + diphosphate + H(+). It catalyses the reaction tRNA(Sec) + L-serine + ATP = L-seryl-tRNA(Sec) + AMP + diphosphate + H(+). Its pathway is aminoacyl-tRNA biosynthesis; selenocysteinyl-tRNA(Sec) biosynthesis; L-seryl-tRNA(Sec) from L-serine and tRNA(Sec): step 1/1. Functionally, catalyzes the attachment of serine to tRNA(Ser). Is also able to aminoacylate tRNA(Sec) with serine, to form the misacylated tRNA L-seryl-tRNA(Sec), which will be further converted into selenocysteinyl-tRNA(Sec). The chain is Serine--tRNA ligase from Azotobacter vinelandii (strain DJ / ATCC BAA-1303).